The sequence spans 526 residues: Peptide chain release factor 3 (526 aa).

The tr-type G domain maps to 9–277 (DKRRTFAIIS…GIVEWAPRPQ (269 aa)). Residues 18-25 (SHPDAGKT), 86-90 (DTPGH), and 140-143 (NKLD) each bind GTP.

This sequence belongs to the TRAFAC class translation factor GTPase superfamily. Classic translation factor GTPase family. PrfC subfamily.

The protein localises to the cytoplasm. In terms of biological role, increases the formation of ribosomal termination complexes and stimulates activities of RF-1 and RF-2. It binds guanine nucleotides and has strong preference for UGA stop codons. It may interact directly with the ribosome. The stimulation of RF-1 and RF-2 is significantly reduced by GTP and GDP, but not by GMP. This Shewanella loihica (strain ATCC BAA-1088 / PV-4) protein is Peptide chain release factor 3.